The primary structure comprises 144 residues: Maximins 7/H1 (144 aa).

Residues 1–18 form the signal peptide; that stretch reads MNFKYIVAVSFLIASAYA. Residues 19–43 constitute a propeptide that is removed on maturation; that stretch reads RSEENDEQSLSQRDVLEEESLREIR. Asn-70 carries the asparagine amide modification. Positions 74 to 123 are excised as a propeptide; the sequence is TAEDHEVMKRLEAVMRDLDSLDYPEEAAERETRGFNQEEIANLFTKKEKR. Leu-143 carries the post-translational modification Leucine amide.

The protein belongs to the bombinin family. As to expression, expressed by the skin glands.

The protein localises to the secreted. Maximin-7 shows antimicrobial activity against bacteria and against the fungus C.albicans. It has little hemolytic activity. In terms of biological role, maximin-H1 shows antibacterial activity against both Gram-positive and Gram-negative bacteria. It also shows antimicrobial activity against the fungus C.albicans. Shows strong hemolytic activity. In Bombina maxima (Giant fire-bellied toad), this protein is Maximins 7/H1.